Here is a 431-residue protein sequence, read N- to C-terminus: Trigger factor (431 aa).

The region spanning 164-249 (GNIAVIDFKG…IKEIKVKELP (86 aa)) is the PPIase FKBP-type domain.

This sequence belongs to the FKBP-type PPIase family. Tig subfamily.

Its subcellular location is the cytoplasm. The enzyme catalyses [protein]-peptidylproline (omega=180) = [protein]-peptidylproline (omega=0). In terms of biological role, involved in protein export. Acts as a chaperone by maintaining the newly synthesized protein in an open conformation. Functions as a peptidyl-prolyl cis-trans isomerase. This Clostridium tetani (strain Massachusetts / E88) protein is Trigger factor.